An 80-amino-acid chain; its full sequence is Small, acid-soluble spore protein Tlp (80 aa).

It belongs to the Tlp family.

It is found in the spore core. The protein is Small, acid-soluble spore protein Tlp of Bacillus pumilus (strain SAFR-032).